We begin with the raw amino-acid sequence, 172 residues long: Small ribosomal subunit protein uS13c (172 aa).

The transit peptide at Met-1–Cys-47 directs the protein to the chloroplast.

Component of the chloroplast small ribosomal subunit (SSU). Mature 70S chloroplast ribosomes of higher plants consist of a small (30S) and a large (50S) subunit. The 30S small subunit contains 1 molecule of ribosomal RNA (16S rRNA) and 24 different proteins. The 50S large subunit contains 3 rRNA molecules (23S, 5S and 4.5S rRNA) and 33 different proteins. uS13c interacts with translation factor pY (PSRP1).

The protein localises to the plastid. The protein resides in the chloroplast. Functionally, component of the chloroplast ribosome (chloro-ribosome), a dedicated translation machinery responsible for the synthesis of chloroplast genome-encoded proteins, including proteins of the transcription and translation machinery and components of the photosynthetic apparatus. The protein is Small ribosomal subunit protein uS13c (RPS13) of Spinacia oleracea (Spinach).